A 79-amino-acid chain; its full sequence is Translational regulator CsrA (79 aa).

Belongs to the CsrA/RsmA family. As to quaternary structure, homodimer; the beta-strands of each monomer intercalate to form a hydrophobic core, while the alpha-helices form wings that extend away from the core.

The protein localises to the cytoplasm. In terms of biological role, a translational regulator that binds mRNA to regulate translation initiation and/or mRNA stability. Usually binds in the 5'-UTR at or near the Shine-Dalgarno sequence preventing ribosome-binding, thus repressing translation. Its main target seems to be the major flagellin gene, while its function is anatagonized by FliW. The polypeptide is Translational regulator CsrA (Geotalea uraniireducens (strain Rf4) (Geobacter uraniireducens)).